The chain runs to 348 residues: Succinylglutamate desuccinylase (348 aa).

Positions 67, 70, and 164 each coordinate Zn(2+). Residue Glu228 is part of the active site.

This sequence belongs to the AspA/AstE family. Succinylglutamate desuccinylase subfamily. Zn(2+) serves as cofactor.

The catalysed reaction is N-succinyl-L-glutamate + H2O = L-glutamate + succinate. Its pathway is amino-acid degradation; L-arginine degradation via AST pathway; L-glutamate and succinate from L-arginine: step 5/5. In terms of biological role, transforms N(2)-succinylglutamate into succinate and glutamate. This Shewanella denitrificans (strain OS217 / ATCC BAA-1090 / DSM 15013) protein is Succinylglutamate desuccinylase.